The chain runs to 481 residues: Cytochrome c oxidase subunit 1 (481 aa).

Residues 22–42 form a helical membrane-spanning segment; it reads ISYLWLAYWFGMIGFYMSVLI. Ca(2+)-binding residues include glutamate 45 and glycine 50. The next 8 helical transmembrane spans lie at 64–84, 109–129, 151–171, 194–214, 240–260, 278–298, 309–329, and 343–363; these read LLFT…GLFG, SLLF…LEIG, FIIF…VNFI, IVLT…VFLM, LFWF…FGII, MILA…TSYV, YFTT…FNWV, and LVLF…TGVV. Histidine 69 contacts Fe(II)-heme a. A Cu cation-binding site is contributed by histidine 246. The 1'-histidyl-3'-tyrosine (His-Tyr) cross-link spans 246–250; the sequence is HPEVY. Tyrosine 250 contacts O2. Mg(2+) contacts are provided by histidine 374 and aspartate 375. Histidine 382 is a heme a3 binding site. Transmembrane regions (helical) follow at residues 382–402 and 420–440; these read HFHF…IIYI and IAPI…FTGF. Residue histidine 384 participates in Fe(II)-heme a binding. Proline 448 contacts Ca(2+). A helical transmembrane segment spans residues 459-479; that stretch reads FICTLGATMMLVLKLAILFII.

This sequence belongs to the heme-copper respiratory oxidase family. Component of the cytochrome c oxidase (complex IV, CIV), a multisubunit enzyme composed of a catalytic core of 3 subunits and several supernumerary subunits. The complex exists as a monomer or a dimer and forms supercomplexes (SCs) in the inner mitochondrial membrane with ubiquinol-cytochrome c oxidoreductase (cytochrome b-c1 complex, complex III, CIII). It depends on heme as a cofactor. Cu cation serves as cofactor.

The protein localises to the mitochondrion inner membrane. It carries out the reaction 4 Fe(II)-[cytochrome c] + O2 + 8 H(+)(in) = 4 Fe(III)-[cytochrome c] + 2 H2O + 4 H(+)(out). It functions in the pathway energy metabolism; oxidative phosphorylation. Functionally, component of the cytochrome c oxidase, the last enzyme in the mitochondrial electron transport chain which drives oxidative phosphorylation. The respiratory chain contains 3 multisubunit complexes succinate dehydrogenase (complex II, CII), ubiquinol-cytochrome c oxidoreductase (cytochrome b-c1 complex, complex III, CIII) and cytochrome c oxidase (complex IV, CIV), that cooperate to transfer electrons derived from NADH and succinate to molecular oxygen, creating an electrochemical gradient over the inner membrane that drives transmembrane transport and the ATP synthase. Cytochrome c oxidase is the component of the respiratory chain that catalyzes the reduction of oxygen to water. Electrons originating from reduced cytochrome c in the intermembrane space (IMS) are transferred via the dinuclear copper A center (CU(A)) of subunit 2 and heme A of subunit 1 to the active site in subunit 1, a binuclear center (BNC) formed by heme A3 and copper B (CU(B)). The BNC reduces molecular oxygen to 2 water molecules using 4 electrons from cytochrome c in the IMS and 4 protons from the mitochondrial matrix. The polypeptide is Cytochrome c oxidase subunit 1 (MT-CO1) (Theileria parva (East coast fever infection agent)).